A 233-amino-acid polypeptide reads, in one-letter code: Maternal B9.15 protein (233 aa).

Positions K135–N165 are disordered.

Belongs to the BTG family.

The sequence is that of Maternal B9.15 protein from Xenopus laevis (African clawed frog).